A 728-amino-acid polypeptide reads, in one-letter code: Probable ubiquitin-conjugating enzyme protein 17 (728 aa).

Residues 1-17 (MSSQASQRSSSTSAVAQ) show a composition bias toward low complexity. 2 disordered regions span residues 1-23 (MSSQ…RERR) and 123-155 (SSRS…GSTR). The UBC core domain maps to 402–568 (DRTKRIAKEL…IEHATLNYAI (167 aa)). C495 acts as the Glycyl thioester intermediate in catalysis. Disordered stretches follow at residues 649-678 (PFAK…EAAA) and 709-728 (RTQP…STSS). The segment covering 658–678 (SERLKREQSEKEEKQKKEAAA) has biased composition (basic and acidic residues). Positions 710-728 (TQPTGDYSVPSVNEPSTSS) are enriched in polar residues.

It belongs to the ubiquitin-conjugating enzyme family.

This Caenorhabditis elegans protein is Probable ubiquitin-conjugating enzyme protein 17 (ubc-17).